The chain runs to 375 residues: MAKKTQKDFLNPKELIKHIDIKKYSQAVSMVEDFSNMAYSSRDLARASKIYNMMLADKGCAVVLCLAGSLISAGLKKIVVDLLENNMIDAIVSTGANIVDQDFFEALGYKHYKGDQHNADDNLLRDLHIDRIYDTYINEDELKVCDETVHKILNTLEPRPYSSREIIWEMGKWLEAKKKGKDSIIYTAYKKGVPIFVPAFADCSAGFGFVAHQTERPTSHVTLDGAKDFLELTKIKINAKETGLLMFAGGVPKNFVQDTVVAAEILGQDSPMHKYAVQVTVADERDGALSGSTLKEASSWGKVSTALEQMVYAECTLAVPLITAYAYHKKAWKSRKGFNYIKFLQNDDAKIAKMKKQECCCCESKKSASKKAKKK.

The protein belongs to the deoxyhypusine synthase family.

The protein is Deoxyhypusine synthase-like protein of Elusimicrobium minutum (strain Pei191).